Reading from the N-terminus, the 185-residue chain is MINDIINDSKSRMEKSLGSLKTELAKLRTCRAHPSLLEHIKVDYYNVETPLSQVASIAIENPRTLSITPWEKNMVGPIEKAIQKADLGLNPATVGMVIRVPLPPLTEERRKELARVVREEAEHARVAIRNIRREANNDLKELMKEKEISEDEERRAQTAIQKLTDAQIAEVDKMASQKEADLMAV.

The protein belongs to the RRF family.

Its subcellular location is the cytoplasm. Its function is as follows. Responsible for the release of ribosomes from messenger RNA at the termination of protein biosynthesis. May increase the efficiency of translation by recycling ribosomes from one round of translation to another. The protein is Ribosome-recycling factor of Coxiella burnetii (strain RSA 493 / Nine Mile phase I).